Consider the following 68-residue polypeptide: Pleurocidin (68 aa).

The N-terminal stretch at 1 to 22 (MKFTATFLMIAIFVLMVEPGEC) is a signal peptide. Positions 48 to 68 (GDKQELNKRAVDEDPNVIVFE) are excised as a propeptide.

This sequence belongs to the pleurocidin family. In terms of tissue distribution, goblet cells.

It localises to the secreted. Antimicrobial peptide with potent activity against Gram-positive and Gram-negative bacteria. Activity against E.coli and B.subtilis. Weaker activity against L.mucor, s.marcescens and P.aeruginosa. May play a role in innate host defense. The protein is Pleurocidin (ple2) of Pseudopleuronectes americanus (Winter flounder).